The chain runs to 443 residues: 3-ketoacyl-CoA thiolase 1, peroxisomal (443 aa).

Residues 1–30 constitute a peroxisome transit peptide; it reads MEKATERQRILLRHLQPSSSSDASLSASAC. Catalysis depends on C130, which acts as the Acyl-thioester intermediate. Catalysis depends on proton acceptor residues H385 and C417.

It belongs to the thiolase-like superfamily. Thiolase family. As to quaternary structure, homodimer. In terms of tissue distribution, low levels in seedlings and leaves.

The protein resides in the peroxisome. It carries out the reaction an acyl-CoA + acetyl-CoA = a 3-oxoacyl-CoA + CoA. It participates in lipid metabolism; fatty acid metabolism. Functionally, involved in fatty-acid beta-oxidation prior to gluconeogenesis during germination and subsequent seedling growth. Implicated in jasmonic acid (JA) biosynthesis. The chain is 3-ketoacyl-CoA thiolase 1, peroxisomal (KAT1) from Arabidopsis thaliana (Mouse-ear cress).